The chain runs to 329 residues: 4-hydroxythreonine-4-phosphate dehydrogenase (329 aa).

Substrate is bound by residues His136 and Thr137. Positions 166, 211, and 266 each coordinate a divalent metal cation. Lys274, Asn283, and Arg292 together coordinate substrate.

Belongs to the PdxA family. As to quaternary structure, homodimer. It depends on Zn(2+) as a cofactor. The cofactor is Mg(2+). Requires Co(2+) as cofactor.

It localises to the cytoplasm. It carries out the reaction 4-(phosphooxy)-L-threonine + NAD(+) = 3-amino-2-oxopropyl phosphate + CO2 + NADH. It functions in the pathway cofactor biosynthesis; pyridoxine 5'-phosphate biosynthesis; pyridoxine 5'-phosphate from D-erythrose 4-phosphate: step 4/5. In terms of biological role, catalyzes the NAD(P)-dependent oxidation of 4-(phosphooxy)-L-threonine (HTP) into 2-amino-3-oxo-4-(phosphooxy)butyric acid which spontaneously decarboxylates to form 3-amino-2-oxopropyl phosphate (AHAP). The sequence is that of 4-hydroxythreonine-4-phosphate dehydrogenase from Pseudomonas putida (strain ATCC 47054 / DSM 6125 / CFBP 8728 / NCIMB 11950 / KT2440).